A 947-amino-acid polypeptide reads, in one-letter code: Beta-glucosidase (947 aa).

D696 is a catalytic residue.

Belongs to the glycosyl hydrolase 3 family.

It catalyses the reaction Hydrolysis of terminal, non-reducing beta-D-glucosyl residues with release of beta-D-glucose.. The protein operates within glycan metabolism; cellulose degradation. The chain is Beta-glucosidase from Ruminococcus albus.